A 507-amino-acid polypeptide reads, in one-letter code: ATP synthase subunit alpha, chloroplastic (507 aa).

170–177 (GDRQTGKT) lines the ATP pocket.

Belongs to the ATPase alpha/beta chains family. F-type ATPases have 2 components, CF(1) - the catalytic core - and CF(0) - the membrane proton channel. CF(1) has five subunits: alpha(3), beta(3), gamma(1), delta(1), epsilon(1). CF(0) has four main subunits: a, b, b' and c.

The protein localises to the plastid. The protein resides in the chloroplast thylakoid membrane. It carries out the reaction ATP + H2O + 4 H(+)(in) = ADP + phosphate + 5 H(+)(out). Produces ATP from ADP in the presence of a proton gradient across the membrane. The alpha chain is a regulatory subunit. This is ATP synthase subunit alpha, chloroplastic from Chloranthus spicatus (Chulantree).